The following is a 274-amino-acid chain: Rhamnulose-1-phosphate aldolase (274 aa).

Residue Glu-117 is part of the active site. Residues His-141, His-143, and His-212 each coordinate Zn(2+).

This sequence belongs to the aldolase class II family. RhaD subfamily. In terms of assembly, homotetramer. It depends on Zn(2+) as a cofactor.

It localises to the cytoplasm. It carries out the reaction L-rhamnulose 1-phosphate = (S)-lactaldehyde + dihydroxyacetone phosphate. It participates in carbohydrate degradation; L-rhamnose degradation; glycerone phosphate from L-rhamnose: step 3/3. Functionally, catalyzes the reversible cleavage of L-rhamnulose-1-phosphate to dihydroxyacetone phosphate (DHAP) and L-lactaldehyde. The protein is Rhamnulose-1-phosphate aldolase of Escherichia coli O157:H7.